The following is a 96-amino-acid chain: UPF0235 protein SO_3356 (96 aa).

This sequence belongs to the UPF0235 family.

This chain is UPF0235 protein SO_3356, found in Shewanella oneidensis (strain ATCC 700550 / JCM 31522 / CIP 106686 / LMG 19005 / NCIMB 14063 / MR-1).